A 196-amino-acid chain; its full sequence is GTP cyclohydrolase-2 (196 aa).

49-53 (RVHSE) lines the GTP pocket. 3 residues coordinate Zn(2+): C54, C65, and C67. Residues Q70, 92-94 (EGR), and T114 each bind GTP. D126 (proton acceptor) is an active-site residue. Catalysis depends on R128, which acts as the Nucleophile. 2 residues coordinate GTP: T149 and K154.

The protein belongs to the GTP cyclohydrolase II family. As to quaternary structure, homodimer. Zn(2+) is required as a cofactor.

It catalyses the reaction GTP + 4 H2O = 2,5-diamino-6-hydroxy-4-(5-phosphoribosylamino)-pyrimidine + formate + 2 phosphate + 3 H(+). Its pathway is cofactor biosynthesis; riboflavin biosynthesis; 5-amino-6-(D-ribitylamino)uracil from GTP: step 1/4. Its function is as follows. Catalyzes the conversion of GTP to 2,5-diamino-6-ribosylamino-4(3H)-pyrimidinone 5'-phosphate (DARP), formate and pyrophosphate. This is GTP cyclohydrolase-2 from Shigella boydii serotype 18 (strain CDC 3083-94 / BS512).